Consider the following 68-residue polypeptide: DNA-directed RNA polymerase subunit omega (68 aa).

It belongs to the RNA polymerase subunit omega family. As to quaternary structure, the RNAP catalytic core consists of 2 alpha, 1 beta, 1 beta' and 1 omega subunit. When a sigma factor is associated with the core the holoenzyme is formed, which can initiate transcription.

It carries out the reaction RNA(n) + a ribonucleoside 5'-triphosphate = RNA(n+1) + diphosphate. Its function is as follows. Promotes RNA polymerase assembly. Latches the N- and C-terminal regions of the beta' subunit thereby facilitating its interaction with the beta and alpha subunits. This chain is DNA-directed RNA polymerase subunit omega, found in Ruminiclostridium cellulolyticum (strain ATCC 35319 / DSM 5812 / JCM 6584 / H10) (Clostridium cellulolyticum).